A 364-amino-acid polypeptide reads, in one-letter code: Alanine racemase (364 aa).

Catalysis depends on lysine 34, which acts as the Proton acceptor; specific for D-alanine. An N6-(pyridoxal phosphate)lysine modification is found at lysine 34. Arginine 129 contributes to the substrate binding site. The Proton acceptor; specific for L-alanine role is filled by tyrosine 259. Position 307 (methionine 307) interacts with substrate.

Belongs to the alanine racemase family. It depends on pyridoxal 5'-phosphate as a cofactor.

It catalyses the reaction L-alanine = D-alanine. Its pathway is amino-acid biosynthesis; D-alanine biosynthesis; D-alanine from L-alanine: step 1/1. Catalyzes the interconversion of L-alanine and D-alanine. May also act on other amino acids. This Coxiella burnetii (strain RSA 493 / Nine Mile phase I) protein is Alanine racemase (alr).